Consider the following 287-residue polypeptide: Protein HEXIM2 (287 aa).

Disordered stretches follow at residues 1–212 (MKDW…RSKE) and 266–287 (RLRQ…QPGS). Ser31 carries the phosphoserine modification. Phosphothreonine is present on residues Thr34 and Thr48. Phosphoserine is present on residues Ser53, Ser55, Ser73, Ser78, and Ser83. Over residues 89-105 (ARKKHRRRPSKRKRHWR) the composition is skewed to basic residues. Residues 115 to 134 (KQQRDERQSQRASRVREEMF) are compositionally biased toward basic and acidic residues. Residues 142–145 (PYNT) are interaction with P-TEFb. Composition is skewed to basic and acidic residues over residues 181-212 (GQGR…RSKE) and 266-280 (RLRQ…EGGR). Residues 208-278 (GRSKEELVRD…QENEMWNREG (71 aa)) adopt a coiled-coil conformation. The interaction with CCNT1, HEXIM1 and HEXIM2 stretch occupies residues 227-287 (QAEEEMRRLR…GGRRGGQPGS (61 aa)).

The protein belongs to the HEXIM family. Homooligomer and heterooligomer with HEXIM1; probably dimeric. Core component of the 7SK RNP complex, at least composed of 7SK RNA, LARP7, MEPCE, HEXIM1 (or HEXIM2) and P-TEFb (composed of CDK9 and CCNT1/cyclin-T1). Interacts with CCNT2.

It is found in the nucleus. Its function is as follows. Transcriptional regulator which functions as a general RNA polymerase II transcription inhibitor. Core component of the 7SK RNP complex: in cooperation with 7SK snRNA sequesters P-TEFb in a large inactive 7SK snRNP complex preventing RNA polymerase II phosphorylation and subsequent transcriptional elongation. The sequence is that of Protein HEXIM2 (HEXIM2) from Bos taurus (Bovine).